Here is a 187-residue protein sequence, read N- to C-terminus: Inner membrane-spanning protein YciB (187 aa).

The next 5 membrane-spanning stretches (helical) occupy residues 22–42 (IYVA…VTYA), 50–70 (MQLI…FFHD), 80–100 (IIYV…KSVV), 118–138 (INWA…YIAY), and 148–168 (FKVF…GVYI).

Belongs to the YciB family.

The protein localises to the cell inner membrane. Functionally, plays a role in cell envelope biogenesis, maintenance of cell envelope integrity and membrane homeostasis. This is Inner membrane-spanning protein YciB from Vibrio parahaemolyticus serotype O3:K6 (strain RIMD 2210633).